A 416-amino-acid chain; its full sequence is Probable glucan 1,3-beta-glucosidase A (416 aa).

Positions 1–22 (MIFKFSQKALVALYLVVGLAEA) are cleaved as a signal peptide. Residue Glu211 is the Proton donor of the active site. 2 disulfides stabilise this stretch: Cys291–Cys415 and Cys316–Cys342. Glu308 (nucleophile) is an active-site residue. N-linked (GlcNAc...) asparagine glycosylation is present at Asn344.

Belongs to the glycosyl hydrolase 5 (cellulase A) family. In terms of assembly, monomer. Requires Mn(2+) as cofactor.

The protein resides in the secreted. The enzyme catalyses Successive hydrolysis of beta-D-glucose units from the non-reducing ends of (1-&gt;3)-beta-D-glucans, releasing alpha-glucose.. Functionally, beta-glucanases participate in the metabolism of beta-glucan, the main structural component of the cell wall. It could also function biosynthetically as a transglycosylase. The chain is Probable glucan 1,3-beta-glucosidase A (exgA) from Aspergillus fumigatus (strain ATCC MYA-4609 / CBS 101355 / FGSC A1100 / Af293) (Neosartorya fumigata).